Reading from the N-terminus, the 165-residue chain is Putative L,D-transpeptidase YkuD (165 aa).

Residues 2–46 form the LysM domain; it reads LMYQVKPGETLESIAADFRTTRQALLQANPGLNGGQVSAGQSIII. The L,D-TPase catalytic domain occupies 57–164; the sequence is YRIAVSLNGR…VPNGTRVSIT (108 aa). His-124 serves as the catalytic Proton donor/acceptor. Catalysis depends on Cys-140, which acts as the Nucleophile.

It belongs to the YkuD family. In terms of assembly, monomer.

The protein resides in the spore wall. Its pathway is cell wall biogenesis; peptidoglycan biosynthesis. Its function is as follows. Probable enzyme that may play an important role in cell wall biology. This is Putative L,D-transpeptidase YkuD from Bacillus licheniformis (strain ATCC 14580 / DSM 13 / JCM 2505 / CCUG 7422 / NBRC 12200 / NCIMB 9375 / NCTC 10341 / NRRL NRS-1264 / Gibson 46).